The chain runs to 251 residues: tRNA wybutosine-synthesizing protein 3 homolog (251 aa).

Residues 213–240 (YRRRRKRTQDVSVTDSSQNTQEHHENTE) form a disordered region.

The protein belongs to the TYW3 family.

It carries out the reaction 4-demethyl-7-[(3S)-3-amino-3-carboxypropyl]wyosine(37) in tRNA(Phe) + S-adenosyl-L-methionine = 7-[(3S)-3-amino-3-carboxypropyl]wyosine(37) in tRNA(Phe) + S-adenosyl-L-homocysteine + H(+). It functions in the pathway tRNA modification; wybutosine-tRNA(Phe) biosynthesis. Probable S-adenosyl-L-methionine-dependent methyltransferase that acts as a component of the wybutosine biosynthesis pathway. Wybutosine is a hyper modified guanosine with a tricyclic base found at the 3'-position adjacent to the anticodon of eukaryotic phenylalanine tRNA. The polypeptide is tRNA wybutosine-synthesizing protein 3 homolog (tyw3) (Danio rerio (Zebrafish)).